Reading from the N-terminus, the 199-residue chain is dITP/XTP pyrophosphatase (199 aa).

9–14 (TGNKGK) contacts substrate. Mg(2+)-binding residues include glutamate 41 and aspartate 70. Catalysis depends on aspartate 70, which acts as the Proton acceptor. Substrate is bound by residues serine 71, 157-160 (FGYD), lysine 180, and 185-186 (HR).

Belongs to the HAM1 NTPase family. In terms of assembly, homodimer. Mg(2+) is required as a cofactor.

The enzyme catalyses XTP + H2O = XMP + diphosphate + H(+). It carries out the reaction dITP + H2O = dIMP + diphosphate + H(+). The catalysed reaction is ITP + H2O = IMP + diphosphate + H(+). In terms of biological role, pyrophosphatase that catalyzes the hydrolysis of nucleoside triphosphates to their monophosphate derivatives, with a high preference for the non-canonical purine nucleotides XTP (xanthosine triphosphate), dITP (deoxyinosine triphosphate) and ITP. Seems to function as a house-cleaning enzyme that removes non-canonical purine nucleotides from the nucleotide pool, thus preventing their incorporation into DNA/RNA and avoiding chromosomal lesions. This Mannheimia succiniciproducens (strain KCTC 0769BP / MBEL55E) protein is dITP/XTP pyrophosphatase.